We begin with the raw amino-acid sequence, 427 residues long: Adenylosuccinate synthetase (427 aa).

GTP-binding positions include 12-18 (GDEGKGK) and 40-42 (GHT). The active-site Proton acceptor is aspartate 13. Mg(2+) is bound by residues aspartate 13 and glycine 40. IMP is bound by residues 13-16 (DEGK), 38-41 (NAGH), threonine 127, arginine 141, glutamine 222, threonine 237, and arginine 301. Histidine 41 functions as the Proton donor in the catalytic mechanism. 297-303 (VVTKRPR) serves as a coordination point for substrate. Residues arginine 303, 329-331 (SLD), and 411-413 (AVG) contribute to the GTP site.

Belongs to the adenylosuccinate synthetase family. As to quaternary structure, homodimer. Requires Mg(2+) as cofactor.

Its subcellular location is the cytoplasm. It catalyses the reaction IMP + L-aspartate + GTP = N(6)-(1,2-dicarboxyethyl)-AMP + GDP + phosphate + 2 H(+). The protein operates within purine metabolism; AMP biosynthesis via de novo pathway; AMP from IMP: step 1/2. Plays an important role in the de novo pathway of purine nucleotide biosynthesis. Catalyzes the first committed step in the biosynthesis of AMP from IMP. This Leuconostoc citreum (strain KM20) protein is Adenylosuccinate synthetase.